We begin with the raw amino-acid sequence, 126 residues long: Glycine cleavage system H protein (126 aa).

A Lipoyl-binding domain is found at 24–106; it reads TITVGITDHA…YGEGWFFRMK (83 aa). Residue Lys-65 is modified to N6-lipoyllysine.

The protein belongs to the GcvH family. The glycine cleavage system is composed of four proteins: P, T, L and H. (R)-lipoate is required as a cofactor.

In terms of biological role, the glycine cleavage system catalyzes the degradation of glycine. The H protein shuttles the methylamine group of glycine from the P protein to the T protein. The protein is Glycine cleavage system H protein of Psychrobacter arcticus (strain DSM 17307 / VKM B-2377 / 273-4).